We begin with the raw amino-acid sequence, 876 residues long: MAP7 domain-containing protein 3 (876 aa).

Disordered regions lie at residues 30–139, 162–200, and 402–438; these read AEER…KFKA, GGVMNADKSGKLENKRSSSLSRKDNRLHPRGDMQHVDNT, and TEAPLQARGESRLEASVEGQPEANVEGSPKNPEIDKR. Residues 39 to 54 show a composition bias toward polar residues; it reads INSSAGANKRSSSTPD. Positions 58 to 136 form a coiled coil; the sequence is LKNDVKQQLA…KQKQAEDTEK (79 aa). Basic and acidic residues-rich tracts occupy residues 60–139 and 169–196; these read NDVK…KFKA and KSGKLENKRSSSLSRKDNRLHPRGDMQH. A phosphoserine mark is found at Ser417 and Ser483. Coiled coils occupy residues 549–578 and 626–658; these read IQIRHAAYEQSKNEKERLQKEETKQRIARK and SAMMKSRDSAEQRKKEQENILQHWQERLERRKA. Disordered stretches follow at residues 558–683 and 742–783; these read QSKN…EIFP and IQGK…NPNH. Composition is skewed to basic and acidic residues over residues 559 to 590 and 630 to 659; these read SKNEKERLQKEETKQRIARKPEIMAEKLDKVP and KSRDSAEQRKKEQENILQHWQERLERRKAS. The span at 665–679 shows a compositional bias: acidic residues; sequence SEDEADDEGESEDSL. Residues 750-763 are compositionally biased toward basic residues; that stretch reads SAKKPPTRPIRSRK. Positions 771 to 782 are enriched in polar residues; sequence IRPTQSASSNPN.

This sequence belongs to the MAP7 family. As to expression, high expression in lung, skeletal muscle, brain, and kidney, with much weaker expression in spleen, small intestine, liver, and heart.

The protein localises to the cytoplasm. It localises to the cytoskeleton. It is found in the spindle. Promotes the assembly and stability of microtubules. The chain is MAP7 domain-containing protein 3 (Map7d3) from Mus musculus (Mouse).